Reading from the N-terminus, the 509-residue chain is MDEFHRYGKEDSSWQQCFLYPLFFQEDLYAIYHDHYLDGSSSSESMEHLSSNDQFSFLTVKRLIGQIRQQNNSIVFFLNCDPNPLVDRNKSFYYESVLEGLTLVLEVPFSIRSKYSVEGMNEWKSFRSIHSIFPFLEDKFPHSNYILDTRIPYSIHPEILVRTFRRWIRDAPSLHPLRSVLYKYRNSPDNLQKSIIIDPRVNTRFLLFLWNHYVYGCESILVPLLKRSFHPRSLSHGSFPDQTHFDRKIKHIIRNYRRNSLKSIWSLKDPRIHYVRYAERSIIAIKGTHLLVKKCRYHLPIFRQFYFHLWSEPYRVCSHQLSKNCSSSLGYFLRVRMKPLLVRTKMLDELFITDLITDEFDPIVPIVPIIGLLAREKLCDISGRPISKLYWTSLTDDDILDRFDRIWKNIFHYYSGSLDRDGLYRIKYILSLSCAKTLACKHKSTIRVVRKELGPELFKKYFSKEREFDFPAFSSKAAARSQRERIWHSDIPQINPLANSWQKIQDLKS.

This sequence belongs to the intron maturase 2 family. MatK subfamily.

It localises to the plastid. Its subcellular location is the chloroplast. Functionally, usually encoded in the trnK tRNA gene intron. Probably assists in splicing its own and other chloroplast group II introns. The chain is Maturase K from Abies firma (Momi fir).